We begin with the raw amino-acid sequence, 213 residues long: Imidazole glycerol phosphate synthase subunit HisH (213 aa).

Residues 4 to 211 (NIGLIDYGMG…LAWLKKETKD (208 aa)) enclose the Glutamine amidotransferase type-1 domain. Residue Cys-82 is the Nucleophile of the active site. Residues His-186 and Glu-188 contribute to the active site.

As to quaternary structure, heterodimer of HisH and HisF.

Its subcellular location is the cytoplasm. The catalysed reaction is 5-[(5-phospho-1-deoxy-D-ribulos-1-ylimino)methylamino]-1-(5-phospho-beta-D-ribosyl)imidazole-4-carboxamide + L-glutamine = D-erythro-1-(imidazol-4-yl)glycerol 3-phosphate + 5-amino-1-(5-phospho-beta-D-ribosyl)imidazole-4-carboxamide + L-glutamate + H(+). The enzyme catalyses L-glutamine + H2O = L-glutamate + NH4(+). It participates in amino-acid biosynthesis; L-histidine biosynthesis; L-histidine from 5-phospho-alpha-D-ribose 1-diphosphate: step 5/9. In terms of biological role, IGPS catalyzes the conversion of PRFAR and glutamine to IGP, AICAR and glutamate. The HisH subunit catalyzes the hydrolysis of glutamine to glutamate and ammonia as part of the synthesis of IGP and AICAR. The resulting ammonia molecule is channeled to the active site of HisF. This chain is Imidazole glycerol phosphate synthase subunit HisH, found in Prochlorococcus marinus (strain SARG / CCMP1375 / SS120).